Reading from the N-terminus, the 525-residue chain is GMP synthase [glutamine-hydrolyzing] (525 aa).

One can recognise a Glutamine amidotransferase type-1 domain in the interval 8 to 207; the sequence is KILILDFGSQ…ALDICGCAAN (200 aa). Residue cysteine 85 is the Nucleophile of the active site. Active-site residues include histidine 181 and glutamate 183. A GMPS ATP-PPase domain is found at 208-400; it reads WKPSSIIEDA…LGLPYNMLYR (193 aa). 235 to 241 lines the ATP pocket; that stretch reads SGGVDSS.

In terms of assembly, homodimer.

The enzyme catalyses XMP + L-glutamine + ATP + H2O = GMP + L-glutamate + AMP + diphosphate + 2 H(+). It functions in the pathway purine metabolism; GMP biosynthesis; GMP from XMP (L-Gln route): step 1/1. Catalyzes the synthesis of GMP from XMP. The polypeptide is GMP synthase [glutamine-hydrolyzing] (Shewanella baltica (strain OS223)).